We begin with the raw amino-acid sequence, 119 residues long: Fluoride-specific ion channel FluC (119 aa).

A run of 4 helical transmembrane segments spans residues 5-25 (IIPLSIGAALGATARWLLNLA), 30-50 (IPPATGNLFANWIGAFLIGIF), 59-79 (WKLLLITGFLGSLTTLSGFSL), and 97-117 (IFLHTAGSLLLTWLGLKIGAA). The Na(+) site is built by G69 and T72.

The protein belongs to the fluoride channel Fluc/FEX (TC 1.A.43) family.

It is found in the cell inner membrane. It catalyses the reaction fluoride(in) = fluoride(out). Its activity is regulated as follows. Na(+) is not transported, but it plays an essential structural role and its presence is essential for fluoride channel function. Its function is as follows. Fluoride-specific ion channel. Important for reducing fluoride concentration in the cell, thus reducing its toxicity. The chain is Fluoride-specific ion channel FluC from Neisseria meningitidis serogroup B (strain ATCC BAA-335 / MC58).